A 322-amino-acid chain; its full sequence is Acetyl-coenzyme A carboxylase carboxyl transferase subunit alpha (322 aa).

Residues 30–293 (ALDISAEIAR…KQTLQESLRK (264 aa)) enclose the CoA carboxyltransferase C-terminal domain.

It belongs to the AccA family. As to quaternary structure, acetyl-CoA carboxylase is a heterohexamer composed of biotin carboxyl carrier protein (AccB), biotin carboxylase (AccC) and two subunits each of ACCase subunit alpha (AccA) and ACCase subunit beta (AccD).

Its subcellular location is the cytoplasm. It catalyses the reaction N(6)-carboxybiotinyl-L-lysyl-[protein] + acetyl-CoA = N(6)-biotinyl-L-lysyl-[protein] + malonyl-CoA. Its pathway is lipid metabolism; malonyl-CoA biosynthesis; malonyl-CoA from acetyl-CoA: step 1/1. Component of the acetyl coenzyme A carboxylase (ACC) complex. First, biotin carboxylase catalyzes the carboxylation of biotin on its carrier protein (BCCP) and then the CO(2) group is transferred by the carboxyltransferase to acetyl-CoA to form malonyl-CoA. The sequence is that of Acetyl-coenzyme A carboxylase carboxyl transferase subunit alpha from Nitrosomonas europaea (strain ATCC 19718 / CIP 103999 / KCTC 2705 / NBRC 14298).